The following is a 156-amino-acid chain: Aspercryptin biosynthesis cluster protein B (156 aa).

The signal sequence occupies residues 1–39; it reads MRMANRIGAGRKSALQLSHLRTRLTSSAAAVATAPTLDP.

Belongs to the YciI family.

The protein operates within secondary metabolite biosynthesis. Functionally, part of the gene cluster that mediates the biosynthesis of aspercryptins, linear lipopeptides built from six amino acids including 2 highly unusual and nonproteogenic amino acids, 2-amino-octanoic acid (2aoa) and 2-amino-dodecanol (2adol). The core structure of aspercryptins is as follows: Ser/Ala-Thr-Ile/Val-2aoa-Aasn-2adol. The first step of aspercryptin biosynthesis is the generation of the fatty acid precursors, octanoic and dodecanoic acids, by the FAS subunits atnF and atnM. The fatty acid precursors are likely transformed into the corresponding alpha-amino fatty acids in three steps. First, they are hydroxylated by the cytochrome P450 monooxygenase atnE, then oxidized to the corresponding alpha-keto acids by the NAD(P)-dependent oxidoreductase atnD, and finally converted to the alpha-amino fatty acids by the PLP-dependent aminotransferases atnH or atnJ. the alpha-amino fatty acids, 2-amino-octanoic and 2-amino-dodecanoic acids, are recognized, activated, and covalently tethered to the NRPS atnA by its fourth and sixth adenylation domains. The second module of atnA is the Thr module and contains an epimerase (E) domain responsible for the epimerization of Thr to D-allo-Thr. Additionally, despite atnA having only one epimerase domain, the first amino acid of aspercryptin A1 is D-Ser, suggesting that serine is either loaded directly as D-Ser on the first module or that the epimerase domain in the threonine module epimerizes both L-Ser and L-Thr. After condensation of the hexapeptide of aspercryptin, the C-terminal reductase (TE) domain might be involved in the reductive release and production of the aldehyde hexapeptide. Further reduction would generate aspercryptins. The variety of aspercryptins produced reflects the flexibility of the atnA NRPS, allowing incorporation of alanine instead of serine, valine for isoleucine, and a C10 fatty amino alcohol instead of the C12 version. AtnB seems to be involved in the selectivity for Ile versus Val by the third module. Moreover, type B, C and D aspercryptins have an additional N-terminal cichorine, acetyl and propionyl group respectively. The chain is Aspercryptin biosynthesis cluster protein B from Emericella nidulans (strain FGSC A4 / ATCC 38163 / CBS 112.46 / NRRL 194 / M139) (Aspergillus nidulans).